Consider the following 724-residue polypeptide: Catalase-peroxidase (724 aa).

The segment at residues 98-226 is a cross-link (tryptophyl-tyrosyl-methioninium (Trp-Tyr) (with M-252)); the sequence is WHAAGSYRTA…LAAVQMGLIY (129 aa). H99 functions as the Proton acceptor in the catalytic mechanism. Residues 226-252 constitute a cross-link (tryptophyl-tyrosyl-methioninium (Tyr-Met) (with W-98)); that stretch reads YVNPQGVNGEPDPLRTALHVRETFARM. H267 is a binding site for heme b.

It belongs to the peroxidase family. Peroxidase/catalase subfamily. As to quaternary structure, homodimer or homotetramer. It depends on heme b as a cofactor. Post-translationally, formation of the three residue Trp-Tyr-Met cross-link is important for the catalase, but not the peroxidase activity of the enzyme.

The catalysed reaction is H2O2 + AH2 = A + 2 H2O. The enzyme catalyses 2 H2O2 = O2 + 2 H2O. Its function is as follows. Bifunctional enzyme with both catalase and broad-spectrum peroxidase activity. This chain is Catalase-peroxidase, found in Cereibacter sphaeroides (strain ATCC 17025 / ATH 2.4.3) (Rhodobacter sphaeroides).